Reading from the N-terminus, the 354-residue chain is Putative Xaa-Pro aminopeptidase (354 aa).

Residues Asp213, Asp224, His290, Glu319, and Glu333 each coordinate Mn(2+).

This sequence belongs to the peptidase M24B family. The cofactor is Mn(2+).

It carries out the reaction Release of any N-terminal amino acid, including proline, that is linked to proline, even from a dipeptide or tripeptide.. This Mycoplasma pneumoniae (strain ATCC 29342 / M129 / Subtype 1) (Mycoplasmoides pneumoniae) protein is Putative Xaa-Pro aminopeptidase (pepP).